The chain runs to 284 residues: UPF0761 membrane protein IL2447 (284 aa).

6 consecutive transmembrane segments (helical) span residues 41–61, 98–118, 137–157, 178–198, 214–234, and 247–267; these read MLSLVPLLVVMFTVFSAFPMF, MTAIGVGFLFIVAIMLMSAID, FAVYWMLLTLGPVLIGSGLAA, FVLWFVPIVTSFVFFVLMYQL, VIAALLFELSKQLFSLYITFF, and IPILIVWIYLSWLIVLIGAVL.

The protein belongs to the UPF0761 family.

It is found in the cell inner membrane. This Idiomarina loihiensis (strain ATCC BAA-735 / DSM 15497 / L2-TR) protein is UPF0761 membrane protein IL2447.